The primary structure comprises 394 residues: NAD(P)H-quinone oxidoreductase subunit H 2 (394 aa).

The protein belongs to the complex I 49 kDa subunit family. As to quaternary structure, NDH-1 can be composed of about 15 different subunits; different subcomplexes with different compositions have been identified which probably have different functions.

The protein resides in the cell inner membrane. It carries out the reaction a plastoquinone + NADH + (n+1) H(+)(in) = a plastoquinol + NAD(+) + n H(+)(out). The enzyme catalyses a plastoquinone + NADPH + (n+1) H(+)(in) = a plastoquinol + NADP(+) + n H(+)(out). Its function is as follows. NDH-1 shuttles electrons from an unknown electron donor, via FMN and iron-sulfur (Fe-S) centers, to quinones in the respiratory and/or the photosynthetic chain. The immediate electron acceptor for the enzyme in this species is believed to be plastoquinone. Couples the redox reaction to proton translocation, and thus conserves the redox energy in a proton gradient. Cyanobacterial NDH-1 also plays a role in inorganic carbon-concentration. The chain is NAD(P)H-quinone oxidoreductase subunit H 2 from Gloeobacter violaceus (strain ATCC 29082 / PCC 7421).